Consider the following 930-residue polypeptide: Dual serine/threonine and tyrosine protein kinase (930 aa).

Over residues 1–14 the composition is skewed to low complexity; the sequence is MEGDGVPWGSEPVS. A disordered region spans residues 1–22; that stretch reads MEGDGVPWGSEPVSGPGPGGGG. Coiled-coil stretches lie at residues 190 to 216 and 396 to 432; these read EEDL…MHHA and RKKE…KEEL. Positions 653–907 constitute a Protein kinase domain; the sequence is PKLGQELGRG…PLLGIVQPML (255 aa). ATP-binding positions include 659–667 and lysine 682; that span reads LGRGQYGVV. Catalysis depends on aspartate 778, which acts as the Proton acceptor.

The protein belongs to the protein kinase superfamily. Ser/Thr protein kinase family.

Its subcellular location is the cytoplasm. It localises to the cell membrane. It is found in the apical cell membrane. The protein resides in the basolateral cell membrane. The protein localises to the cell junction. It catalyses the reaction L-seryl-[protein] + ATP = O-phospho-L-seryl-[protein] + ADP + H(+). It carries out the reaction L-threonyl-[protein] + ATP = O-phospho-L-threonyl-[protein] + ADP + H(+). The catalysed reaction is L-tyrosyl-[protein] + ATP = O-phospho-L-tyrosyl-[protein] + ADP + H(+). Acts as a positive regulator of ERK phosphorylation downstream of fibroblast growth factor-receptor activation. Involved in the regulation of both caspase-dependent apoptosis and caspase-independent cell death. In the skin, it plays a predominant role in suppressing caspase-dependent apoptosis in response to UV stress in a range of dermal cell types. The chain is Dual serine/threonine and tyrosine protein kinase (DSTYK) from Pan troglodytes (Chimpanzee).